A 305-amino-acid chain; its full sequence is MTAVLPLPQPLADPAPRDPRQRLQREQLRLGKRLQRQVGQAIADFGMIAPGDKIMVCLSGGKDSYTLLDMLLQLQRKAPVPFSLVAVNLDQKQPDFPAHVLPAYLRGLGVPFAIVEQDTYSVVSRVIPAGKTMCSLCSRLRRGALYAYAQTHGVTKIALGHHRDDIVATFFMNLFHHARLAAMAPKLRSDDGAHVVIRPLAYVREADIAAYAQARQFPIIPCNLCGSQENLQRQQVGKLLQQWDRESPGRVEQIARALGDVRPEQLADRTLFDFLALGRSGDAPSGLDPDPRAWLSAGHATHDSD.

Positions 1 to 20 (MTAVLPLPQPLADPAPRDPR) are disordered. Residues 59-64 (SGGKDS) carry the PP-loop motif motif. Residues Cys134, Cys137, and Cys225 each coordinate [4Fe-4S] cluster. Residues 282 to 305 (DAPSGLDPDPRAWLSAGHATHDSD) form a disordered region.

Belongs to the TtcA family. Homodimer. Mg(2+) is required as a cofactor. [4Fe-4S] cluster serves as cofactor.

It is found in the cytoplasm. The enzyme catalyses cytidine(32) in tRNA + S-sulfanyl-L-cysteinyl-[cysteine desulfurase] + AH2 + ATP = 2-thiocytidine(32) in tRNA + L-cysteinyl-[cysteine desulfurase] + A + AMP + diphosphate + H(+). The protein operates within tRNA modification. Catalyzes the ATP-dependent 2-thiolation of cytidine in position 32 of tRNA, to form 2-thiocytidine (s(2)C32). The sulfur atoms are provided by the cysteine/cysteine desulfurase (IscS) system. This is tRNA-cytidine(32) 2-sulfurtransferase from Xanthomonas axonopodis pv. citri (strain 306).